Consider the following 186-residue polypeptide: Ribosome-recycling factor (186 aa).

Belongs to the RRF family.

Its subcellular location is the cytoplasm. In terms of biological role, responsible for the release of ribosomes from messenger RNA at the termination of protein biosynthesis. May increase the efficiency of translation by recycling ribosomes from one round of translation to another. The protein is Ribosome-recycling factor of Rickettsia prowazekii (strain Madrid E).